Here is a 223-residue protein sequence, read N- to C-terminus: RNA-free ribonuclease P (223 aa).

It belongs to the HARP family.

The catalysed reaction is Endonucleolytic cleavage of RNA, removing 5'-extranucleotides from tRNA precursor.. Functionally, RNA-free RNase P that catalyzes the removal of the 5'-leader sequence from pre-tRNA to produce the mature 5'-terminus. The protein is RNA-free ribonuclease P of Methanococcus maripaludis (strain C7 / ATCC BAA-1331).